The following is a 158-amino-acid chain: Large ribosomal subunit protein uL15 (158 aa).

The protein belongs to the universal ribosomal protein uL15 family. Part of the 50S ribosomal subunit.

Its function is as follows. Binds to the 23S rRNA. This chain is Large ribosomal subunit protein uL15, found in Aeropyrum pernix (strain ATCC 700893 / DSM 11879 / JCM 9820 / NBRC 100138 / K1).